The chain runs to 252 residues: Triosephosphate isomerase (252 aa).

Residue 8–10 (NWK) participates in substrate binding. Catalysis depends on His-95, which acts as the Electrophile. Residue Glu-167 is the Proton acceptor of the active site. Substrate is bound by residues Gly-173, Ser-212, and 233–234 (GG).

Belongs to the triosephosphate isomerase family. As to quaternary structure, homodimer.

The protein localises to the cytoplasm. It catalyses the reaction D-glyceraldehyde 3-phosphate = dihydroxyacetone phosphate. It functions in the pathway carbohydrate biosynthesis; gluconeogenesis. The protein operates within carbohydrate degradation; glycolysis; D-glyceraldehyde 3-phosphate from glycerone phosphate: step 1/1. Involved in the gluconeogenesis. Catalyzes stereospecifically the conversion of dihydroxyacetone phosphate (DHAP) to D-glyceraldehyde-3-phosphate (G3P). This chain is Triosephosphate isomerase, found in Lawsonia intracellularis (strain PHE/MN1-00).